The sequence spans 706 residues: F-box/WD repeat-containing protein 7 (706 aa).

The interval 1–157 is disordered; it reads MNQELLSVGS…IVDLPIHQRS (157 aa). A Phosphoserine modification is found at Ser26. Residues 32-54 are compositionally biased toward basic and acidic residues; it reads QMNRVLEEEQQQPRHQEEEHAAR. A compositionally biased stretch (polar residues) spans 69–83; that stretch reads NDPQQGQLEENNNRF. A compositionally biased stretch (acidic residues) spans 86–128; that stretch reads VDEDSSGNQEEQEEDEEHAGEQDEEDEEEEEMDQESDDFDQSD. Basic and acidic residues predominate over residues 129 to 138; it reads DSSREDEHTH. A Phosphothreonine modification is found at Thr204. Ser226 is modified (phosphoserine). Residues 277–323 form the F-box domain; sequence RDFISLLPKELALYVLSFLEPKDLLQAAQTCRYWRILAEDNLLWREK. WD repeat units follow at residues 377–417, 419–455, 458–497, 499–535, 538–577, 579–617, and 621–658; these read GHDD…RTLV, HTGGVWSSQMRDNIIISGSTDRTLKVWNAETGECIHT, GHTSTVRCMHLHEKRVVSGSRDATLRVWDIETGQCLHVLM, HVAAVRCVQYDGRRVVSGAYDFMVKVWDPETETCLHT, GHTNRVYSLQFDGIHVVSGSLDTSIRVWDVETGNCIHTLT, HQSLTSGMELKDNILVSGNADSTVKIWDIKTGQCLQTLQ, and KHQSAVTCLQFNKNFVITSSDDGTVKLWDLKTGEFIRN.

In terms of assembly, homodimer; homodimerization plays a role in substrate binding and/or ubiquitination and degradation. Component of the SCF(FBXW7) complex consisting of CUL1, RBX1, SKP1 and FBXW7. Interacts (via F-box domain) with SKP1. Interacts (via F-box domain) with pseudophosphatase STYX; the interaction is direct and prevents FBXW7 interaction with SKP1. Interacts with cyclin-E (CCNE1 or CCNE2). Interacts with PSEN1. Forms a trimeric complex with NOTCH1 and SGK1. Interacts with NOTCH1 intracellular domain/NICD and NOTCH4 intracellular domain/NICD. Interacts with NOTCH2 intracellular domain (N2ICD). Interacts with MYC (when phosphorylated). Interacts with USP28, counteracting ubiquitination of MYC. Interacts with JUN. Found in a complex with JUN and PRR7. Interacts with JUN and PRR7; the interaction inhibits ubiquitination-mediated JUN degradation, promoting its phosphorylation and transcriptional activity. Interacts (when phosphorylated at Thr-204) with PIN1, disrupting FBXW7 dimerization and promoting FBXW7 autoubiquitination and degradation. Interacts with UBE2QL1. Interacts with FAM83D; promotes FBXW7 degradation. Interacts with MYCN; FBXW7 competes with AURKA for binding to unphosphorylated MYCN but not for binding to phosphorylated MYCN. Interacts with STOML1. Interacts with NFE2L1. Interacts with USP36, counteracting ubiquitination of MYC. Interacts with RICTOR; mediates RICTOR ubiquitination and degradation.l Interacts with USP38, counteracting ubiquitination of MYC. (Microbial infection) In case of infection, interacts with T.annulata PIN1 (TaPIN1); leading to FBXW7 autoubiquitination and subsequent degradation: FBXW7 degradation promotes stabilization of JUN, which promotes cell transformation. Post-translationally, phosphorylation at Thr-204 promotes interaction with PIN1, leading to disrupt FBXW7 dimerization and promoting FBXW7 autoubiquitination and degradation. Phosphorylated by ATM at Ser-26 in response to DNA damage, promoting recruitment to DNA damage sites and 'Lys-63'-linked ubiquitination of phosphorylated XRCC4. In terms of processing, ubiquitinated: autoubiquitinates following phosphorylation at Thr-204 and subsequent interaction with PIN1. Ubiquitination leads to its degradation.

Its subcellular location is the nucleus. The protein localises to the nucleoplasm. The protein resides in the chromosome. It participates in protein modification; protein ubiquitination. Substrate recognition component of a SCF (SKP1-CUL1-F-box protein) E3 ubiquitin-protein ligase complex which mediates the ubiquitination and subsequent proteasomal degradation of target proteins. Recognizes and binds phosphorylated sites/phosphodegrons within target proteins and thereafter brings them to the SCF complex for ubiquitination. Identified substrates include cyclin-E (CCNE1 or CCNE2), DISC1, JUN, MYC, NOTCH1 released notch intracellular domain (NICD), NOTCH2, MCL1, MLST8, RICTOR, and probably PSEN1. Acts as a negative regulator of JNK signaling by binding to phosphorylated JUN and promoting its ubiquitination and subsequent degradation. SCF(FBXW7) complex mediates the ubiquitination and subsequent degradation of NFE2L1. Involved in bone homeostasis and negative regulation of osteoclast differentiation. Also able to promote 'Lys-63'-linked ubiquitination in response to DNA damage. The SCF(FBXW7) complex facilitates double-strand break repair following phosphorylation by ATM: phosphorylation promotes localization to sites of double-strand breaks and 'Lys-63'-linked ubiquitination of phosphorylated XRCC4, enhancing DNA non-homologous end joining. This chain is F-box/WD repeat-containing protein 7, found in Bos taurus (Bovine).